We begin with the raw amino-acid sequence, 91 residues long: Early E3B 10.4 kDa protein (91 aa).

The signal sequence occupies residues 1-21 (MVTVLLIFLCLPVIFSSSTFA). The Lumenal portion of the chain corresponds to 22 to 33 (AVSDLDPECLAP). The helical transmembrane segment at 34 to 56 (FAVYLIFTFVTATCVCSIITLLI) threads the bilayer. Topologically, residues 57–91 (TSLQFFDYYYVRIVYRRHHPRYQNPQIAALLQLQP) are cytoplasmic.

Belongs to the adenoviridae E3B family.

It localises to the host endoplasmic reticulum membrane. Functionally, down-regulates the EGF receptor. This is Early E3B 10.4 kDa protein from Homo sapiens (Human).